The sequence spans 119 residues: NADH-quinone oxidoreductase subunit A (119 aa).

The next 3 helical transmembrane spans lie at 7 to 27, 63 to 83, and 88 to 108; these read FPVL…VSIG, LVAI…PWGV, and IGWP…LGFA.

This sequence belongs to the complex I subunit 3 family. As to quaternary structure, NDH-1 is composed of 14 different subunits. Subunits NuoA, H, J, K, L, M, N constitute the membrane sector of the complex.

Its subcellular location is the cell inner membrane. The catalysed reaction is a quinone + NADH + 5 H(+)(in) = a quinol + NAD(+) + 4 H(+)(out). NDH-1 shuttles electrons from NADH, via FMN and iron-sulfur (Fe-S) centers, to quinones in the respiratory chain. The immediate electron acceptor for the enzyme in this species is believed to be ubiquinone. Couples the redox reaction to proton translocation (for every two electrons transferred, four hydrogen ions are translocated across the cytoplasmic membrane), and thus conserves the redox energy in a proton gradient. The sequence is that of NADH-quinone oxidoreductase subunit A from Paraburkholderia xenovorans (strain LB400).